Here is a 418-residue protein sequence, read N- to C-terminus: Serine hydroxymethyltransferase (418 aa).

(6S)-5,6,7,8-tetrahydrofolate contacts are provided by residues Leu121 and 125-127 (GHL). Lys230 is subject to N6-(pyridoxal phosphate)lysine. Position 356–358 (356–358 (SPF)) interacts with (6S)-5,6,7,8-tetrahydrofolate.

It belongs to the SHMT family. In terms of assembly, homodimer. Requires pyridoxal 5'-phosphate as cofactor.

It is found in the cytoplasm. The enzyme catalyses (6R)-5,10-methylene-5,6,7,8-tetrahydrofolate + glycine + H2O = (6S)-5,6,7,8-tetrahydrofolate + L-serine. Its pathway is one-carbon metabolism; tetrahydrofolate interconversion. It participates in amino-acid biosynthesis; glycine biosynthesis; glycine from L-serine: step 1/1. Catalyzes the reversible interconversion of serine and glycine with tetrahydrofolate (THF) serving as the one-carbon carrier. This reaction serves as the major source of one-carbon groups required for the biosynthesis of purines, thymidylate, methionine, and other important biomolecules. Also exhibits THF-independent aldolase activity toward beta-hydroxyamino acids, producing glycine and aldehydes, via a retro-aldol mechanism. The polypeptide is Serine hydroxymethyltransferase (Pseudoalteromonas atlantica (strain T6c / ATCC BAA-1087)).